The sequence spans 545 residues: Coiled-coil domain-containing protein 60 (545 aa).

A coiled-coil region spans residues 72 to 99 (NILREENAMKKKQQLLQKLKEEELNKFQ). The tract at residues 224-284 (PAIRTAMASR…DNESSSTKPE (61 aa)) is disordered. The segment covering 238–259 (RGSTLSLTRTSGGSSPQSSMMS) has biased composition (low complexity).

This Mus musculus (Mouse) protein is Coiled-coil domain-containing protein 60 (Ccdc60).